A 4646-amino-acid chain; its full sequence is Cytoplasmic dynein 1 heavy chain 1 (4646 aa).

Serine 2 bears the N-acetylserine mark. The stem stretch occupies residues 53-1867 (EAALEEKSAL…SIQMANAKFN (1815 aa)). Residue serine 70 is modified to Phosphoserine. Coiled coils occupy residues 181 to 202 (SVEK…NIEI), 455 to 478 (AHRK…QLRA), and 543 to 566 (TEAW…RITA). The tract at residues 448–703 (MVWRINPAHR…NTQEIFDDWA (256 aa)) is interaction with DYNC1I2. An interaction with DYNC1LI2 region spans residues 651–802 (AKQIDRQLTA…EKVEERNTIS (152 aa)). At lysine 1125 the chain carries N6-acetyllysine. Coiled coils occupy residues 1171–1252 (TYVQ…AVES) and 1357–1373 (RKLR…LKSF). Serine 1230 is modified (phosphoserine). AAA stretches follow at residues 1868–2099 (YGFE…VLVS), 2180–2452 (EELK…LTRL), 2556–2805 (EVET…WVRG), and 2899–3168 (VFYE…GGRT). ATP contacts are provided by residues 1906 to 1913 (GPAGTGKT) and 2224 to 2231 (GPSGSGKS). Residues 2390 to 2411 (GEDEAQRRRKGKEDEGEEAASP) form a disordered region. ATP contacts are provided by residues 2595–2602 (GPPGSGKT) and 2937–2944 (GVSGAGKT). 3 coiled-coil regions span residues 3189-3275 (EKRS…ADKQ), 3396-3500 (AIAQ…KNQM), and 3737-3800 (EFQL…VSQQ). The interval 3189 to 3500 (EKRSELEEQQ…KTSETFKNQM (312 aa)) is stalk. Position 3480 is an N6-acetyllysine (lysine 3480). AAA stretches follow at residues 3553–3782 (LSNA…EVTR) and 4005–4221 (AHMF…TVDT). Phosphoserine is present on serine 4162. Lysine 4283 bears the N6-acetyllysine mark. The residue at position 4366 (threonine 4366) is a Phosphothreonine. The residue at position 4368 (serine 4368) is a Phosphoserine.

The protein belongs to the dynein heavy chain family. In terms of assembly, homodimer. The cytoplasmic dynein 1 complex consists of two catalytic heavy chains (HCs) and a number of non-catalytic subunits presented by intermediate chains (ICs), light intermediate chains (LICs) and light chains (LCs); the composition seems to vary in respect to the IC, LIC and LC composition. The heavy chain homodimer serves as a scaffold for the probable homodimeric assembly of the respective non-catalytic subunits. The ICs and LICs bind directly to the HC dimer and dynein LCs assemble on the IC dimer. Interacts with DYNC1LI1; DYNC1LI1 and DYNC1LI2 bind mutually exclusive to DYNC1H1. Interacts with DYNC1LI2; DYNC1LI1 and DYNC1LI2 bind mutually exclusive to DYNC1H1. Interacts with DYNC1I2. Interacts with BICD2. Interacts with isoform 2 of CRACR2A. Interacts with DNALI1.

The protein localises to the cytoplasm. It is found in the cytoskeleton. Its function is as follows. Cytoplasmic dynein 1 acts as a motor for the intracellular retrograde motility of vesicles and organelles along microtubules. Dynein has ATPase activity; the force-producing power stroke is thought to occur on release of ADP. Plays a role in mitotic spindle assembly and metaphase plate congression. In Homo sapiens (Human), this protein is Cytoplasmic dynein 1 heavy chain 1.